A 183-amino-acid polypeptide reads, in one-letter code: Capsid protein (183 aa).

Residues 136-183 form a disordered region; sequence NAPILSTLPETTVVRRRGRSPRRRTPSPRRRRSQSPRRRRSQSPASQC. A compositionally biased stretch (basic residues) spans 149-176; that stretch reads VRRRGRSPRRRTPSPRRRRSQSPRRRRS. 3 positions are modified to phosphoserine; by host: S155, S162, and S170. One copy of the 1; half-length repeat lies at 155-161; the sequence is SPRRRTP. The 3 X 8 AA repeats of S-P-R-R-R-[PR]-S-Q stretch occupies residues 155-177; the sequence is SPRRRTPSPRRRRSQSPRRRRSQ. A Bipartite nuclear localization signal motif is present at residues 158-175; the sequence is RRTPSPRRRRSQSPRRRR. 2 consecutive repeat copies span residues 162 to 169 and 170 to 177. An RNA binding region spans residues 177 to 183; that stretch reads QSPASQC.

It belongs to the orthohepadnavirus core antigen family. In terms of assembly, homodimerizes, then multimerizes. Interacts with cytosol exposed regions of viral L glycoprotein present in the reticulum-to-Golgi compartment. Interacts with human FLNB. Phosphorylated form interacts with host importin alpha; this interaction depends on the exposure of the NLS, which itself depends upon genome maturation and/or phosphorylation of the capsid protein. Interacts with host NUP153. Post-translationally, phosphorylated by host SRPK1, SRPK2, and maybe protein kinase C or GAPDH. Phosphorylation is critical for pregenomic RNA packaging. Protein kinase C phosphorylation is stimulated by HBx protein and may play a role in transport of the viral genome to the nucleus at the late step during the viral replication cycle.

The protein resides in the virion. The protein localises to the host cytoplasm. Functionally, self assembles to form an icosahedral capsid. Most capsids appear to be large particles with an icosahedral symmetry of T=4 and consist of 240 copies of capsid protein, though a fraction forms smaller T=3 particles consisting of 180 capsid proteins. Entering capsids are transported along microtubules to the nucleus. Phosphorylation of the capsid is thought to induce exposure of nuclear localization signal in the C-terminal portion of the capsid protein that allows binding to the nuclear pore complex via the importin (karyopherin-) alpha and beta. Capsids are imported in intact form through the nuclear pore into the nuclear basket, where it probably binds NUP153. Only capsids that contain the mature viral genome can release the viral DNA and capsid protein into the nucleoplasm. Immature capsids get stuck in the basket. Capsids encapsulate the pre-genomic RNA and the P protein. Pre-genomic RNA is reverse-transcribed into DNA while the capsid is still in the cytoplasm. The capsid can then either be directed to the nucleus, providing more genomes for transcription, or bud through the endoplasmic reticulum to provide new virions. This Pan troglodytes (Chimpanzee) protein is Capsid protein.